The primary structure comprises 602 residues: Bifunctional ribose 1,5-bisphosphokinase-thymidine phosphorylase (602 aa).

The ribose 1,5-bisphosphokinase stretch occupies residues 1–187 (MKESGTFFLV…ALRNGANAGS (187 aa)). Positions 188–602 (VPQPASRRHL…ASTAVRVDPD (415 aa)) are thymidinephosphorylase.

This sequence in the N-terminal section; belongs to the ribose 1,5-bisphosphokinase family. In the C-terminal section; belongs to the thymidine/pyrimidine-nucleoside phosphorylase family. Type 2 subfamily.

The enzyme catalyses alpha-D-ribose 1,5-bisphosphate + ATP = 5-phospho-alpha-D-ribose 1-diphosphate + ADP. The catalysed reaction is thymidine + phosphate = 2-deoxy-alpha-D-ribose 1-phosphate + thymine. It functions in the pathway metabolic intermediate biosynthesis; 5-phospho-alpha-D-ribose 1-diphosphate biosynthesis; 5-phospho-alpha-D-ribose 1-diphosphate from D-ribose 5-phosphate (route II): step 3/3. In terms of biological role, catalyzes the phosphorylation of ribose 1,5-bisphosphate to 5-phospho-D-ribosyl alpha-1-diphosphate (PRPP). The protein is Bifunctional ribose 1,5-bisphosphokinase-thymidine phosphorylase (phnN) of Cupriavidus pinatubonensis (strain JMP 134 / LMG 1197) (Cupriavidus necator (strain JMP 134)).